The following is a 459-amino-acid chain: Argininosuccinate lyase (459 aa).

This sequence belongs to the lyase 1 family. Argininosuccinate lyase subfamily.

The protein resides in the cytoplasm. The enzyme catalyses 2-(N(omega)-L-arginino)succinate = fumarate + L-arginine. Its pathway is amino-acid biosynthesis; L-arginine biosynthesis; L-arginine from L-ornithine and carbamoyl phosphate: step 3/3. The protein is Argininosuccinate lyase of Desulforudis audaxviator (strain MP104C).